Consider the following 404-residue polypeptide: Multidrug resistance protein MdtG (404 aa).

The next 11 helical transmembrane spans lie at 19 to 39 (LGCF…PLYV), 56 to 76 (LVFS…GGLA), 90 to 110 (LGMA…QFLI), 113 to 133 (ALLG…ATQV), 144 to 164 (TLST…GLLA), 171 to 191 (PVFF…FFFI), 222 to 242 (LFVT…ILTL), 254 to 274 (IAFI…LSAP), 288 to 308 (ILIV…FVQT), 317 to 337 (FLLG…LVYN), and 376 to 396 (AVFC…WNSL).

Belongs to the major facilitator superfamily. DHA1 family. MdtG (TC 2.A.1.2.20) subfamily.

It localises to the cell inner membrane. The sequence is that of Multidrug resistance protein MdtG from Salmonella typhimurium (strain LT2 / SGSC1412 / ATCC 700720).